Consider the following 347-residue polypeptide: Quinolinate synthase (347 aa).

Residues His-47 and Ser-68 each contribute to the iminosuccinate site. A [4Fe-4S] cluster-binding site is contributed by Cys-113. Iminosuccinate is bound by residues 139–141 and Ser-156; that span reads YAN. Cys-200 contributes to the [4Fe-4S] cluster binding site. Iminosuccinate is bound by residues 226 to 228 and Thr-243; that span reads HPE. Cys-297 contributes to the [4Fe-4S] cluster binding site.

It belongs to the quinolinate synthase family. Type 1 subfamily. It depends on [4Fe-4S] cluster as a cofactor.

It localises to the cytoplasm. The catalysed reaction is iminosuccinate + dihydroxyacetone phosphate = quinolinate + phosphate + 2 H2O + H(+). It participates in cofactor biosynthesis; NAD(+) biosynthesis; quinolinate from iminoaspartate: step 1/1. Functionally, catalyzes the condensation of iminoaspartate with dihydroxyacetone phosphate to form quinolinate. This chain is Quinolinate synthase, found in Salmonella agona (strain SL483).